A 157-amino-acid polypeptide reads, in one-letter code: Large ribosomal subunit protein uL15 (157 aa).

It belongs to the universal ribosomal protein uL15 family. Part of the 50S ribosomal subunit.

Its function is as follows. Binds to the 23S rRNA. The chain is Large ribosomal subunit protein uL15 from Ehrlichia ruminantium (strain Gardel).